The chain runs to 279 residues: Phospholipase A and acyltransferase 5 (279 aa).

2 disordered regions span residues 1-53 (MGLS…GLNS) and 70-117 (QLPA…ENEG). The span at 97–106 (LETTPSQKAD) shows a compositional bias: polar residues. One can recognise an LRAT domain in the interval 135–249 (LIEIFRIGYE…LRYGVPRSQQ (115 aa)). Residues histidine 145 and histidine 157 contribute to the active site. Cysteine 233 acts as the Acyl-thioester intermediate in catalysis.

The protein belongs to the H-rev107 family. Highest expression level in testis and pancreas.

The protein resides in the cytoplasm. The protein localises to the cytosol. The catalysed reaction is a 1,2-diacyl-sn-glycero-3-phosphocholine + H2O = a 1-acyl-sn-glycero-3-phosphocholine + a fatty acid + H(+). The enzyme catalyses a 1,2-diacyl-sn-glycero-3-phosphocholine + H2O = a 2-acyl-sn-glycero-3-phosphocholine + a fatty acid + H(+). It carries out the reaction 1-hexadecanoyl-2-(5Z,8Z,11Z,14Z-eicosatetraenoyl)-sn-glycero-3-phosphocholine + 1,2-di-(9Z-octadecenoyl)-sn-glycero-3-phosphoethanolamine = N-(5Z,8Z,11Z,14Z-eicosatetraenoyl)-1,2-di-(9Z-octadecenoyl)-sn-glycero-3-phosphoethanolamine + 1-hexadecanoyl-sn-glycero-3-phosphocholine + H(+). It catalyses the reaction 1,2-di-(9Z-octadecenoyl)-sn-glycero-3-phosphoethanolamine + 1,2-dihexadecanoyl-sn-glycero-3-phosphocholine = N-hexadecanoyl-1,2-di-(9Z-octadecenoyl)-sn-glycero-3-phosphoethanolamine + 1-hexadecanoyl-sn-glycero-3-phosphocholine + H(+). The catalysed reaction is 1,2-di-(9Z-octadecenoyl)-sn-glycero-3-phosphoethanolamine + 1,2-dihexadecanoyl-sn-glycero-3-phosphocholine = N-hexadecanoyl-1,2-di-(9Z-octadecenoyl)-sn-glycero-3-phosphoethanolamine + 2-hexadecanoyl-sn-glycero-3-phosphocholine + H(+). The enzyme catalyses a 1,2-diacyl-sn-glycero-3-phosphoethanolamine + a 1,2-diacyl-sn-glycero-3-phosphocholine = an N-acyl-1,2-diacyl-sn-glycero-3-phosphoethanolamine + a 1-acyl-sn-glycero-3-phosphocholine + H(+). It carries out the reaction a 1,2-diacyl-sn-glycero-3-phosphoethanolamine + a 1,2-diacyl-sn-glycero-3-phosphocholine = an N-acyl-1,2-diacyl-sn-glycero-3-phosphoethanolamine + a 2-acyl-sn-glycero-3-phosphocholine + H(+). It catalyses the reaction 1-hexadecanoyl-2-(9Z-octadecenoyl)-sn-glycero-3-phosphocholine + 1,2-di-(9Z-octadecenoyl)-sn-glycero-3-phosphoethanolamine = N,1,2-tri-(9Z-octadecenoyl)-sn-glycero-3-phosphoethanolamine + 1-hexadecanoyl-sn-glycero-3-phosphocholine + H(+). Functionally, exhibits both phospholipase A1/2 and acyltransferase activities. Shows phospholipase A1 (PLA1) and A2 (PLA2) activity, catalyzing the calcium-independent release of fatty acids from the sn-1 or sn-2 position of glycerophospholipids. Shows N-acyltransferase activity, catalyzing the calcium-independent transfer of a fatty acyl group at the sn-1 position of phosphatidylcholine (PC) and other glycerophospholipids to the primary amine of phosphatidylethanolamine (PE), forming N-acylphosphatidylethanolamine (NAPE), which serves as precursor for N-acylethanolamines (NAEs). This Homo sapiens (Human) protein is Phospholipase A and acyltransferase 5.